A 951-amino-acid polypeptide reads, in one-letter code: Glycine dehydrogenase (decarboxylating) 1 (951 aa).

K703 carries the post-translational modification N6-(pyridoxal phosphate)lysine.

This sequence belongs to the GcvP family. In terms of assembly, the glycine cleavage system is composed of four proteins: P, T, L and H. Pyridoxal 5'-phosphate is required as a cofactor.

It catalyses the reaction N(6)-[(R)-lipoyl]-L-lysyl-[glycine-cleavage complex H protein] + glycine + H(+) = N(6)-[(R)-S(8)-aminomethyldihydrolipoyl]-L-lysyl-[glycine-cleavage complex H protein] + CO2. Its function is as follows. The glycine cleavage system catalyzes the degradation of glycine. The P protein binds the alpha-amino group of glycine through its pyridoxal phosphate cofactor; CO(2) is released and the remaining methylamine moiety is then transferred to the lipoamide cofactor of the H protein. This Pseudomonas fluorescens (strain ATCC BAA-477 / NRRL B-23932 / Pf-5) protein is Glycine dehydrogenase (decarboxylating) 1.